The following is a 216-amino-acid chain: Serine acetyltransferase (216 aa).

Belongs to the transferase hexapeptide repeat family.

The protein localises to the cytoplasm. It carries out the reaction L-serine + acetyl-CoA = O-acetyl-L-serine + CoA. Its pathway is amino-acid biosynthesis; L-cysteine biosynthesis; L-cysteine from L-serine: step 1/2. The sequence is that of Serine acetyltransferase (cysE) from Staphylococcus xylosus.